Reading from the N-terminus, the 337-residue chain is Glyceraldehyde-3-phosphate dehydrogenase (337 aa).

Residues Arg-17–Ile-18, Asp-39, Lys-83, and Ser-125 each bind NAD(+). D-glyceraldehyde 3-phosphate is bound by residues Ser-156–Thr-158, Thr-187, Arg-202, Thr-215–Gly-216, and Arg-238. Residue Cys-157 is the Nucleophile of the active site. Asn-319 serves as a coordination point for NAD(+).

It belongs to the glyceraldehyde-3-phosphate dehydrogenase family. Homotetramer.

Its subcellular location is the cytoplasm. It carries out the reaction D-glyceraldehyde 3-phosphate + phosphate + NAD(+) = (2R)-3-phospho-glyceroyl phosphate + NADH + H(+). The protein operates within carbohydrate degradation; glycolysis; pyruvate from D-glyceraldehyde 3-phosphate: step 1/5. Its function is as follows. Catalyzes the oxidative phosphorylation of glyceraldehyde 3-phosphate (G3P) to 1,3-bisphosphoglycerate (BPG) using the cofactor NAD. The first reaction step involves the formation of a hemiacetal intermediate between G3P and a cysteine residue, and this hemiacetal intermediate is then oxidized to a thioester, with concomitant reduction of NAD to NADH. The reduced NADH is then exchanged with the second NAD, and the thioester is attacked by a nucleophilic inorganic phosphate to produce BPG. This chain is Glyceraldehyde-3-phosphate dehydrogenase (gapA), found in Mycoplasma pneumoniae (strain ATCC 29342 / M129 / Subtype 1) (Mycoplasmoides pneumoniae).